The primary structure comprises 367 residues: Phthiodiolone/phenolphthiodiolone dimycocerosates ketoreductase (367 aa).

Belongs to the mer family. Phthiodiolone/phenolphthiodiolone dimycocerosates ketoreductase subfamily.

Its function is as follows. Catalyzes the reduction of the keto moiety of phthiodiolone dimycocerosates (DIM B) and glycosylated phenolphthiodiolone dimycocerosates to form the intermediate compounds phthiotriol and glycosylated phenolphthiotriol dimycocerosates during phthiocerol dimycocerosates (DIM A) and glycosylated phenolphthiocerol dimycocerosates (PGL) biosynthesis. The chain is Phthiodiolone/phenolphthiodiolone dimycocerosates ketoreductase from Mycobacterium kansasii.